Consider the following 218-residue polypeptide: uncharacterized protein (218 aa).

5 helical membrane-spanning segments follow: residues Val-19–Ile-39, Phe-92–Val-112, Tyr-124–Ala-144, Leu-161–Phe-181, and Tyr-196–Leu-216.

It is found in the cell membrane. This is an uncharacterized protein from Methanocaldococcus jannaschii (strain ATCC 43067 / DSM 2661 / JAL-1 / JCM 10045 / NBRC 100440) (Methanococcus jannaschii).